We begin with the raw amino-acid sequence, 619 residues long: Trihelix transcription factor GTL2 (619 aa).

2 disordered regions span residues 11–41 and 62–100; these read HRFIASPPPPPPLPPHQPAAERSLPFPVSFS and HHHHHHHHHDIKDGGATTGEWIGQTDHDDSDNHHQHHHH. Residues 16 to 27 show a composition bias toward pro residues; sequence SPPPPPPLPPHQ. Residues 102–154 enclose the Myb-like 1 domain; the sequence is PWCSDEVLALLRFRSTVENWFPEFTWEHTSRKLAEVGFKRSPQECKEKFEEEE. Residues 307 to 361 adopt a coiled-coil conformation; it reads VRNMIAQQEEMHKKLLEDMVKKEEEKIAREEAWKKQEIERVNKEVEIRAQEQAMA. Disordered regions lie at residues 382–414 and 434–458; these read VVQNPTSPSQDSSSLALRKTQGRRKFQTSSSLL and STKTLKPKNQNPKPPKSDDKSDLGK. The span at 384-396 shows a compositional bias: polar residues; sequence QNPTSPSQDSSSL. The segment covering 435–444 has biased composition (low complexity); that stretch reads TKTLKPKNQN. The segment covering 448 to 458 has biased composition (basic and acidic residues); the sequence is PKSDDKSDLGK. The 68-residue stretch at 459 to 526 folds into the Myb-like 2 domain; that stretch reads RWPKDEVLAL…RCKEKWENIN (68 aa). The short motif at 503 to 510 is the Nuclear localization signal element; that stretch reads SKKMLEIG. The disordered stretch occupies residues 557–619; sequence SQPPTGTTAT…VQFSGFDLEF (63 aa). Positions 561–574 are enriched in low complexity; sequence TGTTATTATTATSA. The segment covering 575–585 has biased composition (basic and acidic residues); sequence RDLDTRPEENR.

Its subcellular location is the nucleus. In terms of biological role, probable transcription factor that binds specific DNA sequence. The protein is Trihelix transcription factor GTL2 of Arabidopsis thaliana (Mouse-ear cress).